Reading from the N-terminus, the 115-residue chain is Ribonuclease P protein component (115 aa).

The protein belongs to the RnpA family. As to quaternary structure, consists of a catalytic RNA component (M1 or rnpB) and a protein subunit.

It catalyses the reaction Endonucleolytic cleavage of RNA, removing 5'-extranucleotides from tRNA precursor.. Its function is as follows. RNaseP catalyzes the removal of the 5'-leader sequence from pre-tRNA to produce the mature 5'-terminus. It can also cleave other RNA substrates such as 4.5S RNA. The protein component plays an auxiliary but essential role in vivo by binding to the 5'-leader sequence and broadening the substrate specificity of the ribozyme. This Bacillus cereus (strain B4264) protein is Ribonuclease P protein component.